The sequence spans 285 residues: uncharacterized protein (285 aa).

6 consecutive transmembrane segments (helical) span residues phenylalanine 7–glutamine 29, leucine 49–phenylalanine 71, isoleucine 95–leucine 117, phenylalanine 137–alanine 156, lysine 232–leucine 254, and glycine 259–valine 281.

It is found in the cell membrane. This is an uncharacterized protein from Aquifex aeolicus (strain VF5).